We begin with the raw amino-acid sequence, 182 residues long: Isopentenyl-diphosphate Delta-isomerase (182 aa).

2 residues coordinate Mn(2+): His23 and His30. The Nudix hydrolase domain maps to 28–162; it reads PRHLAFSCHV…PWAFSPWLVE (135 aa). The active site involves Cys65. Cys65 lines the Mg(2+) pocket. Residue His67 participates in Mn(2+) binding. Glu85 contributes to the Mg(2+) binding site. Mn(2+) contacts are provided by Glu112 and Glu114. The active site involves Glu114.

This sequence belongs to the IPP isomerase type 1 family. It depends on Mg(2+) as a cofactor. Requires Mn(2+) as cofactor.

Its subcellular location is the cytoplasm. The enzyme catalyses isopentenyl diphosphate = dimethylallyl diphosphate. It participates in isoprenoid biosynthesis; dimethylallyl diphosphate biosynthesis; dimethylallyl diphosphate from isopentenyl diphosphate: step 1/1. Its function is as follows. Catalyzes the 1,3-allylic rearrangement of the homoallylic substrate isopentenyl (IPP) to its highly electrophilic allylic isomer, dimethylallyl diphosphate (DMAPP). This is Isopentenyl-diphosphate Delta-isomerase from Brevibacterium linens.